The primary structure comprises 492 residues: Aerolysin (492 aa).

The signal sequence occupies residues 1–21 (MKALKITGLSLIISATLAAQT). 2 cysteine pairs are disulfide-bonded: C42–C98 and C182–C187. Residues 68-84 (WQISGLANNWVILGPGY) are interaction with host N-linked glycan. Residues 256–288 (YGLSEKVSTKNKFKWPLVGETEVSIEIAANQSW) are part of the transmembrane beta-barrel after proteolytic activation of the toxin and insertion into the host membrane. Residues 346–355 (RWGGNAWHTH) form an interaction with glycans from host GPI-anchor region. The propeptide occupies 446 to 492 (GSDSKVRRTRSVDGANTGLKLDIPLDAQELAELGFENVTLSVTPARN).

Belongs to the aerolysin family. In terms of assembly, homodimer in solution; homoheptamer in the host membrane. After binding to GPI-anchored proteins in target membranes and proteolytic removal of the C-terminal propeptide, the protein assembles into a heptameric pre-pore complex. A further conformation change leads to insertion into the host membrane. Proteolytic cleavage and subsequent release of the propeptide trigger a major conformation change, leading to the formation of a heptameric pre-pore that then inserts into the host membrane.

Its subcellular location is the secreted. It localises to the host cell membrane. In terms of biological role, secreted, cytolytic toxin that forms pores in host membranes after proteolytic removal of a C-terminal propeptide, leading to destruction of the membrane permeability barrier and cell death. The pores are formed by transmembrane beta-strands and are approximately 3 nm in diameter. The polypeptide is Aerolysin (aerA) (Aeromonas enteropelogenes (Aeromonas trota)).